The following is a 192-amino-acid chain: MELLGQKVKEDGVVIDEKILKVDGFLNHQIDAKLMNEVGRTFYEQFKDKGITKILTIEASGIAPAIMAALHFDVPCLFAKKAKPSTLTDGYYETSIHSFTKNKTSTVIVSKEFLSEEDTVLIIDDFLANGDASLGLYDITQQANAKTAGIGIVVEKSFQNGHQRLEEAGLTVSSLCKVASLEGNKVTLVGEE.

2 residues coordinate xanthine: Leu-20 and Asn-27. 128–132 (ANGDA) lines the 5-phospho-alpha-D-ribose 1-diphosphate pocket. Lys-156 is a binding site for xanthine.

It belongs to the purine/pyrimidine phosphoribosyltransferase family. Xpt subfamily. Homodimer.

It is found in the cytoplasm. It carries out the reaction XMP + diphosphate = xanthine + 5-phospho-alpha-D-ribose 1-diphosphate. It functions in the pathway purine metabolism; XMP biosynthesis via salvage pathway; XMP from xanthine: step 1/1. Its function is as follows. Converts the preformed base xanthine, a product of nucleic acid breakdown, to xanthosine 5'-monophosphate (XMP), so it can be reused for RNA or DNA synthesis. The polypeptide is Xanthine phosphoribosyltransferase (Staphylococcus aureus (strain bovine RF122 / ET3-1)).